We begin with the raw amino-acid sequence, 347 residues long: N-acetyl-gamma-glutamyl-phosphate reductase (347 aa).

Cys153 is a catalytic residue.

Belongs to the NAGSA dehydrogenase family. Type 1 subfamily.

The protein resides in the cytoplasm. The enzyme catalyses N-acetyl-L-glutamate 5-semialdehyde + phosphate + NADP(+) = N-acetyl-L-glutamyl 5-phosphate + NADPH + H(+). Its pathway is amino-acid biosynthesis; L-arginine biosynthesis; N(2)-acetyl-L-ornithine from L-glutamate: step 3/4. Catalyzes the NADPH-dependent reduction of N-acetyl-5-glutamyl phosphate to yield N-acetyl-L-glutamate 5-semialdehyde. This is N-acetyl-gamma-glutamyl-phosphate reductase from Mycobacterium leprae (strain Br4923).